Here is a 164-residue protein sequence, read N- to C-terminus: Ribosome maturation factor RimM (164 aa).

A PRC barrel domain is found at 90–161 (EGRYYVADII…EIIIKPVKTW (72 aa)).

This sequence belongs to the RimM family. As to quaternary structure, binds ribosomal protein uS19.

It localises to the cytoplasm. Its function is as follows. An accessory protein needed during the final step in the assembly of 30S ribosomal subunit, possibly for assembly of the head region. Essential for efficient processing of 16S rRNA. May be needed both before and after RbfA during the maturation of 16S rRNA. It has affinity for free ribosomal 30S subunits but not for 70S ribosomes. This is Ribosome maturation factor RimM from Clostridium tetani (strain Massachusetts / E88).